Consider the following 333-residue polypeptide: 4-hydroxyproline epimerase (333 aa).

Cys-90 acts as the Proton acceptor in catalysis. Substrate contacts are provided by residues Gly-91 to His-92 and Asp-249. Cys-253 acts as the Proton donor in catalysis. Residue Gly-254–Thr-255 participates in substrate binding.

The protein belongs to the proline racemase family. In terms of assembly, homodimer.

The enzyme catalyses trans-4-hydroxy-L-proline = cis-4-hydroxy-D-proline. Its function is as follows. Allows intracellular utilization of 4-hydroxyproline, one of the major constituents of host collagen, by converting 4-hydroxy-L-proline to 4-hydroxy-D-proline, which can be further metabolized by intracellular 4-hydroxy-D-proline oxidases. Strong B-cell mitogen. Plays an important role in the regulation of intra- and extracellular amino acid pools, allowing the bacterium to profit from host precursors and enzymatic pathways. The polypeptide is 4-hydroxyproline epimerase (Brucella suis (strain ATCC 23445 / NCTC 10510)).